A 206-amino-acid polypeptide reads, in one-letter code: MELKVTTLEGKEAGSVQLSDAIFGLEPRADIIQRCVQWQLNKRQAGTHKAKGRAEIWRTGKKMYKQKGTGGARHGSARVPQFRGGGRAFGPVVRSHATDLPKKVRALALKHALSAKAKDGDLVVLENATLEAAKTKALIGHFSGLGLTNALIIDGAELHNGFAAAARNIPNLDVLPIQGINVYDILRRQKLVLTKAAIDALEARFK.

The protein belongs to the universal ribosomal protein uL4 family. As to quaternary structure, part of the 50S ribosomal subunit.

Functionally, one of the primary rRNA binding proteins, this protein initially binds near the 5'-end of the 23S rRNA. It is important during the early stages of 50S assembly. It makes multiple contacts with different domains of the 23S rRNA in the assembled 50S subunit and ribosome. In terms of biological role, forms part of the polypeptide exit tunnel. This chain is Large ribosomal subunit protein uL4, found in Bradyrhizobium sp. (strain ORS 278).